The following is a 411-amino-acid chain: Putative competence-damage inducible protein (411 aa).

This sequence belongs to the CinA family.

This Clostridium acetobutylicum (strain ATCC 824 / DSM 792 / JCM 1419 / IAM 19013 / LMG 5710 / NBRC 13948 / NRRL B-527 / VKM B-1787 / 2291 / W) protein is Putative competence-damage inducible protein.